A 358-amino-acid polypeptide reads, in one-letter code: Oxidase FUB9 (358 aa).

Residues 6-350 (SSKPQIFSIQ…SPAHLSILNA (345 aa)) form the FMN hydroxy acid dehydrogenase domain. An a 2-oxocarboxylate-binding site is contributed by Tyr-32. Positions 114, 138, and 166 each coordinate FMN. Arg-175 provides a ligand contact to a 2-oxocarboxylate. Lys-221 is an FMN binding site. The active-site Proton acceptor is His-245. Arg-248 is an a 2-oxocarboxylate binding site. Residues 276-280 (DGGFR) and 299-300 (GR) each bind FMN.

The protein belongs to the FMN-dependent alpha-hydroxy acid dehydrogenase family. FMN serves as cofactor.

Its pathway is mycotoxin biosynthesis. Functionally, oxidase; part of the gene cluster that mediates the biosynthesis of fusaric acid, a mycotoxin with low to moderate toxicity to animals and humans, but with high phytotoxic properties. L-aspartate is suggested as fusaric acid amino acid precursor that is activated and further processed to O-acetyl-L-homoserine by cluster enzymes aspartate kinase FUB3 and homoserine O-acetyltransferase FUB5, as well as enzymes of the primary metabolism. The polyketide synthase (PKS) FUB1 generates the triketide trans-2-hexenal which is presumptively released by the hydrolase FUB4 and linked to the NRPS-bound amino acid precursor by NAD(P)-dependent dehydrogenase FUB6. FUB1, FUB4, and the non-canonical NRPS Fub8 may form an enzyme complex. Further processing of the NRPS-bound intermediate might be carried out by FUB6 and the sulfhydrylase FUB7, enabling a spontaneous electrocyclization to close the carbon backbone of fusaric acid. Dihydrofusaric acid is likely to be released via reduction by the thioester reductase (TR) domain of FUB8 whereupon the final oxidation to fusaric acid may (also) be performed by the FMN-dependent dehydrogenase FUB9. This is Oxidase FUB9 from Gibberella fujikuroi (strain CBS 195.34 / IMI 58289 / NRRL A-6831) (Bakanae and foot rot disease fungus).